A 256-amino-acid chain; its full sequence is Cell division protein ZipA (256 aa).

Residues 1-6 (MQYGRQ) lie on the Periplasmic side of the membrane. A helical transmembrane segment spans residues 7-27 (ILICIGILTVIILLLYGLLNS). Over 28-256 (YWDRTVTFCK…RHVLSANKST (229 aa)) the chain is Cytoplasmic.

The protein belongs to the ZipA family. As to quaternary structure, interacts with FtsZ via their C-terminal domains.

The protein resides in the cell inner membrane. Its function is as follows. Essential cell division protein that stabilizes the FtsZ protofilaments by cross-linking them and that serves as a cytoplasmic membrane anchor for the Z ring. Also required for the recruitment to the septal ring of downstream cell division proteins. The chain is Cell division protein ZipA from Baumannia cicadellinicola subsp. Homalodisca coagulata.